The primary structure comprises 349 residues: GTP 3',8-cyclase (349 aa).

In terms of domain architecture, Radical SAM core spans 26–245 (GFGRAVTYLR…SSFWTLTDIP (220 aa)). Arginine 35 lines the GTP pocket. [4Fe-4S] cluster contacts are provided by cysteine 42 and cysteine 46. Tyrosine 48 serves as a coordination point for S-adenosyl-L-methionine. Cysteine 49 contributes to the [4Fe-4S] cluster binding site. Arginine 84 provides a ligand contact to GTP. Glycine 88 provides a ligand contact to S-adenosyl-L-methionine. Threonine 118 provides a ligand contact to GTP. An S-adenosyl-L-methionine-binding site is contributed by serine 142. Lysine 178 is a binding site for GTP. Methionine 212 lines the S-adenosyl-L-methionine pocket. [4Fe-4S] cluster is bound by residues cysteine 275 and cysteine 278. 280-282 (RVR) lines the GTP pocket. Cysteine 292 lines the [4Fe-4S] cluster pocket.

It belongs to the radical SAM superfamily. MoaA family. Monomer and homodimer. The cofactor is [4Fe-4S] cluster.

It catalyses the reaction GTP + AH2 + S-adenosyl-L-methionine = (8S)-3',8-cyclo-7,8-dihydroguanosine 5'-triphosphate + 5'-deoxyadenosine + L-methionine + A + H(+). It participates in cofactor biosynthesis; molybdopterin biosynthesis. Functionally, catalyzes the cyclization of GTP to (8S)-3',8-cyclo-7,8-dihydroguanosine 5'-triphosphate. In Caulobacter vibrioides (strain ATCC 19089 / CIP 103742 / CB 15) (Caulobacter crescentus), this protein is GTP 3',8-cyclase.